Reading from the N-terminus, the 60-residue chain is Large ribosomal subunit protein bL33 (60 aa).

Belongs to the bacterial ribosomal protein bL33 family.

The protein is Large ribosomal subunit protein bL33 of Christiangramia forsetii (strain DSM 17595 / CGMCC 1.15422 / KT0803) (Gramella forsetii).